A 299-amino-acid chain; its full sequence is ATP phosphoribosyltransferase (299 aa).

It belongs to the ATP phosphoribosyltransferase family. Long subfamily. It depends on Mg(2+) as a cofactor.

The protein localises to the cytoplasm. The catalysed reaction is 1-(5-phospho-beta-D-ribosyl)-ATP + diphosphate = 5-phospho-alpha-D-ribose 1-diphosphate + ATP. It participates in amino-acid biosynthesis; L-histidine biosynthesis; L-histidine from 5-phospho-alpha-D-ribose 1-diphosphate: step 1/9. With respect to regulation, feedback inhibited by histidine. Catalyzes the condensation of ATP and 5-phosphoribose 1-diphosphate to form N'-(5'-phosphoribosyl)-ATP (PR-ATP). Has a crucial role in the pathway because the rate of histidine biosynthesis seems to be controlled primarily by regulation of HisG enzymatic activity. This Campylobacter jejuni subsp. jejuni serotype O:6 (strain 81116 / NCTC 11828) protein is ATP phosphoribosyltransferase.